The sequence spans 164 residues: C-phycoerythrin alpha chain (164 aa).

The (2R,3E)-phycoerythrobilin site is built by Cys-82 and Cys-139.

It belongs to the phycobiliprotein family. In terms of assembly, heterodimer of an alpha and a beta chain. In terms of processing, contains two covalently linked bilin chromophores.

It localises to the cellular thylakoid membrane. In terms of biological role, light-harvesting photosynthetic bile pigment-protein from the phycobiliprotein complex. In Synechocystis sp. (strain PCC 6701), this protein is C-phycoerythrin alpha chain (cpeA).